The following is a 434-amino-acid chain: Methylenetetrahydrofolate--tRNA-(uracil-5-)-methyltransferase TrmFO (434 aa).

Residue 9–14 (GGGLAG) coordinates FAD.

It belongs to the MnmG family. TrmFO subfamily. FAD is required as a cofactor.

The protein resides in the cytoplasm. The catalysed reaction is uridine(54) in tRNA + (6R)-5,10-methylene-5,6,7,8-tetrahydrofolate + NADH + H(+) = 5-methyluridine(54) in tRNA + (6S)-5,6,7,8-tetrahydrofolate + NAD(+). It carries out the reaction uridine(54) in tRNA + (6R)-5,10-methylene-5,6,7,8-tetrahydrofolate + NADPH + H(+) = 5-methyluridine(54) in tRNA + (6S)-5,6,7,8-tetrahydrofolate + NADP(+). Its function is as follows. Catalyzes the folate-dependent formation of 5-methyl-uridine at position 54 (M-5-U54) in all tRNAs. The sequence is that of Methylenetetrahydrofolate--tRNA-(uracil-5-)-methyltransferase TrmFO from Geobacter sulfurreducens (strain ATCC 51573 / DSM 12127 / PCA).